A 235-amino-acid chain; its full sequence is Segregation and condensation protein A (235 aa).

It belongs to the ScpA family. As to quaternary structure, component of a cohesin-like complex composed of ScpA, ScpB and the Smc homodimer, in which ScpA and ScpB bind to the head domain of Smc. The presence of the three proteins is required for the association of the complex with DNA.

The protein resides in the cytoplasm. Participates in chromosomal partition during cell division. May act via the formation of a condensin-like complex containing Smc and ScpB that pull DNA away from mid-cell into both cell halves. The sequence is that of Segregation and condensation protein A from Streptococcus agalactiae serotype III (strain NEM316).